A 476-amino-acid polypeptide reads, in one-letter code: Serine/threonine-protein kinase WAG1 (476 aa).

A Protein kinase domain is found at 93 to 400 (FKLVRHLGTG…AQDIKRHEFF (308 aa)). ATP-binding positions include 99–107 (LGTGNLGRV) and Lys-124. Asp-219 acts as the Proton acceptor in catalysis.

Belongs to the protein kinase superfamily. Ser/Thr protein kinase family. As to expression, expressed in root tips and lateral root primordia.

The protein resides in the cytoplasm. The protein localises to the cytosol. The enzyme catalyses L-seryl-[protein] + ATP = O-phospho-L-seryl-[protein] + ADP + H(+). It carries out the reaction L-threonyl-[protein] + ATP = O-phospho-L-threonyl-[protein] + ADP + H(+). Its function is as follows. Serine/threonine-protein kinase involved in the regulation of auxin signaling. Acts as a positive regulator of cellular auxin efflux and regulates organ development by enhancing PIN-mediated polar auxin transport. Phosphorylates conserved serine residues in the PIN auxin efflux carriers. Phosphorylation of PIN proteins is required and sufficient for apical-basal PIN polarity that enables directional intercellular auxin fluxes, which mediate differential growth, tissue patterning and organogenesis. Acts as a suppressor of root waving. The chain is Serine/threonine-protein kinase WAG1 (WAG1) from Arabidopsis thaliana (Mouse-ear cress).